The sequence spans 431 residues: MRALLARLLLCVLVVSDSKGSNELHQVPSNCDCLNGGTCVSNKYFSNIHWCNCPKKFGGQHCEIDKSKTCYEGNGHFYRGKASTDTMGRPCLAWNSATVLQQTYHAHRSDALQLGLGKHNYCRNPDNRWRPWCYVQVGLKPLVQECMVHDCADGKKPSSPPEELKFQCGQKTLRPRFKIVGGEFTTIENQPWFAAIYRRHRGGSVTYVCGGSLISPCWVVSATHCFIDYPKKEDYIVYLGRSRLNSHTQGEMKFEVENLILHKDYSADTLAHHNDIALLKIHSKEGRCAQPSRTIQTICLPSMYNDPPFGTSCEITGFGKENSTDYLYPEQLKMTVVKLISHRECQQPHYYGSEVTTKMLCAADPQWKTDSCQGDSGGPLVCSLQGRMTLTGIVSWGRGCALKDKPGVYTRVSYFLPWIRSHTKEENGLAL.

The signal sequence occupies residues 1 to 20 (MRALLARLLLCVLVVSDSKG). The EGF-like domain occupies 27 to 63 (VPSNCDCLNGGTCVSNKYFSNIHWCNCPKKFGGQHCE). 6 disulfide bridges follow: Cys31/Cys39, Cys33/Cys51, Cys53/Cys62, Cys70/Cys151, Cys91/Cys133, and Cys122/Cys146. The binds urokinase plasminogen activator surface receptor stretch occupies residues 34–57 (LNGGTCVSNKYFSNIHWCNCPKKF). In terms of domain architecture, Kringle spans 69 to 151 (TCYEGNGHFY…LVQECMVHDC (83 aa)). The tract at residues 152–178 (ADGKKPSSPPEELKFQCGQKTLRPRFK) is connecting peptide. At Ser158 the chain carries Phosphoserine. Cystine bridges form between Cys168/Cys299, Cys209/Cys225, Cys217/Cys288, Cys313/Cys382, Cys345/Cys361, and Cys372/Cys400. The Peptidase S1 domain maps to 179–424 (IVGGEFTTIE…FLPWIRSHTK (246 aa)). Catalysis depends on charge relay system residues His224 and Asp275. N-linked (GlcNAc...) asparagine glycosylation occurs at Asn322. Ser323 bears the Phosphoserine mark. Residue Ser376 is the Charge relay system of the active site.

Belongs to the peptidase S1 family. As to quaternary structure, found in high and low molecular mass forms. Each consists of two chains, A and B. The high molecular mass form contains a long chain A which is cleaved to yield a short chain A. Forms heterodimer with SERPINA5. Binds LRP1B; binding is followed by internalization and degradation. Interacts with MRC2. Interacts with PLAUR. In complex with SERPINE1, interacts with PLAUR/uPAR. Interacts with SORL1 and LRP1, either alone or in complex with SERPINE1; these interactions are abolished in the presence of LRPAP1/RAP. The ternary complex composed of PLAUR-PLAU-PAI1 also interacts with SORLA. Post-translationally, phosphorylation of Ser-158 and Ser-323 abolishes proadhesive ability but does not interfere with receptor binding. Produced as an inactive single-chain protein (pro-uPA or sc-uPA), is processed into the active disulfide-linked two-chain form of PLAU/uPA by a proteolytic event mediated, at least, by TMPRSS4.

It localises to the secreted. The catalysed reaction is Specific cleavage of Arg-|-Val bond in plasminogen to form plasmin.. Inhibited by SERPINA5. Inhibited by SERPINE1. Its function is as follows. Specifically cleaves the zymogen plasminogen to form the active enzyme plasmin. The protein is Urokinase-type plasminogen activator (PLAU) of Pongo abelii (Sumatran orangutan).